A 366-amino-acid chain; its full sequence is UDP-N-acetylglucosamine--N-acetylmuramyl-(pentapeptide) pyrophosphoryl-undecaprenol N-acetylglucosamine transferase (366 aa).

Residues 10–12 (TGG), N124, R165, S192, I247, and Q292 each bind UDP-N-acetyl-alpha-D-glucosamine.

The protein belongs to the glycosyltransferase 28 family. MurG subfamily.

It is found in the cell inner membrane. It carries out the reaction di-trans,octa-cis-undecaprenyl diphospho-N-acetyl-alpha-D-muramoyl-L-alanyl-D-glutamyl-meso-2,6-diaminopimeloyl-D-alanyl-D-alanine + UDP-N-acetyl-alpha-D-glucosamine = di-trans,octa-cis-undecaprenyl diphospho-[N-acetyl-alpha-D-glucosaminyl-(1-&gt;4)]-N-acetyl-alpha-D-muramoyl-L-alanyl-D-glutamyl-meso-2,6-diaminopimeloyl-D-alanyl-D-alanine + UDP + H(+). The protein operates within cell wall biogenesis; peptidoglycan biosynthesis. In terms of biological role, cell wall formation. Catalyzes the transfer of a GlcNAc subunit on undecaprenyl-pyrophosphoryl-MurNAc-pentapeptide (lipid intermediate I) to form undecaprenyl-pyrophosphoryl-MurNAc-(pentapeptide)GlcNAc (lipid intermediate II). This Geotalea daltonii (strain DSM 22248 / JCM 15807 / FRC-32) (Geobacter daltonii) protein is UDP-N-acetylglucosamine--N-acetylmuramyl-(pentapeptide) pyrophosphoryl-undecaprenol N-acetylglucosamine transferase.